Consider the following 325-residue polypeptide: Glutarate 2-hydroxylase (325 aa).

3 residues coordinate Fe cation: H160, D162, and H292.

Belongs to the glutarate hydroxylase family. Homotetramer. The cofactor is Fe(2+).

The enzyme catalyses glutarate + 2-oxoglutarate + O2 = (S)-2-hydroxyglutarate + succinate + CO2. It participates in amino-acid degradation. Its function is as follows. Acts as an alpha-ketoglutarate-dependent dioxygenase catalyzing hydroxylation of glutarate (GA) to L-2-hydroxyglutarate (L2HG). Functions in a L-lysine degradation pathway that proceeds via cadaverine, glutarate and L-2-hydroxyglutarate. The chain is Glutarate 2-hydroxylase from Escherichia coli O17:K52:H18 (strain UMN026 / ExPEC).